The sequence spans 933 residues: MKLKETLNLGKTAFPMRADLPNKEPQWQAAWEQAELYKKRQELNAGKPAFHLHDGPPYANGNIHVGHALNKISKDIIVRSKSMSGFQAPYVPGWDTHGLPIEQVLAKQGIKRKEMDLAEYLEMCRQYALSQVDKQRDDFKRLGVSADWENPYVTLDPQFEADQIRVFGAMAEKGYIYRGAKPVYWSWSSESALAEAEIEYHDIDSTSLYYANKVKDGKGILDTNTYIVVWTTTPFTVTASRGLTVGPDMDYLVVKPAGSDRQYVVAEGLLDSLAGKFGWESFETLASHKGADLEYIVTEHPWDTDVEELVILGDHVTLESGTGIVHTAPGFGEDDYNVGTKYKLEVAVTVDERGLMMENAGPDFHGQFYNKVTPIVIDKLGDLLLAQEVINHSYPFDWRTKKPIIWRAVPQWFASVSDFRQDILDEIEKTTFHPSWGETRLYNMIRDRGDWVISRQRAWGVPLSIFYAEDGTAIMTKEVTDHVADLFQENGSIIWWQKEAKDLLPEGFTHPGSPNGEFTKETDIMDVWFDSGSSWNGVMNARENLSYPADLYLEGSDQYRGWFNSSLITSVAVNGHAPYKAILSQGFVLDGKGEKMSKSKGNIISPNDVAKQYGADILRLWVASVDTDNDVRVSMEILGQVSETYRKIRNTLRFLIANTSDFNPATDTVAYADLGAVDKYMTIVFNQLVATITDAYERYDFMAIYKAVVNFVTVDLSAFYLDFAKDVVYIEAANSLERRRMQTVFYDILVKITKLLTPILPHTTEEIWSYLEYESEAFVQLAEMPVAETFSAQEDILEAWSAFMTLRTQAQKALEEARNAKIIGKSLEAHLTIYASEEVKTLLTALDSDIALLLIVSQLTIADLADAPADAVAFEGIAFMVEHAIGEVCERSRRIDPTTRMRSYNAFVCDHSAKIIEENFPEAVAEGFEESGK.

Residues 57–67 (PYANGNIHVGH) carry the 'HIGH' region motif. Glu-554 lines the L-isoleucyl-5'-AMP pocket. The short motif at 595–599 (KMSKS) is the 'KMSKS' region element. ATP is bound at residue Lys-598.

This sequence belongs to the class-I aminoacyl-tRNA synthetase family. IleS type 1 subfamily. Monomer.

It is found in the cytoplasm. The enzyme catalyses tRNA(Ile) + L-isoleucine + ATP = L-isoleucyl-tRNA(Ile) + AMP + diphosphate. Its function is as follows. Catalyzes the attachment of isoleucine to tRNA(Ile). As IleRS can inadvertently accommodate and process structurally similar amino acids such as valine, to avoid such errors it has two additional distinct tRNA(Ile)-dependent editing activities. One activity is designated as 'pretransfer' editing and involves the hydrolysis of activated Val-AMP. The other activity is designated 'posttransfer' editing and involves deacylation of mischarged Val-tRNA(Ile). The sequence is that of Isoleucine--tRNA ligase from Streptococcus pyogenes serotype M18 (strain MGAS8232).